Here is a 376-residue protein sequence, read N- to C-terminus: Hydroxylysine kinase (376 aa).

D229 functions as the Proton acceptor in the catalytic mechanism.

It belongs to the aminoglycoside phosphotransferase family.

The protein localises to the cytoplasm. The catalysed reaction is (5R)-5-hydroxy-L-lysine + GTP = (5R)-5-phosphooxy-L-lysine + GDP + H(+). Functionally, catalyzes the GTP-dependent phosphorylation of 5-hydroxy-L-lysine. This Bos taurus (Bovine) protein is Hydroxylysine kinase (HYKK).